Here is a 417-residue protein sequence, read N- to C-terminus: MIDLKFLRENPDAVRASQRSRGEDPALVDALLDADAARRAAVSAADNLRAEQKAASKKVGKASPEERPALLTQAKELAEQVKAAEAAQADADRTFTAAHMAISNVVIEGVPAGGEDCFAVLDVVGEPRAIDDPKDHLELGEALGLIDMERGAKVAGSRFYFLTGRGALLQLGLMQLAVRLATDNGFTLVIPPVLVRPEVMAGTGFLGAHADEVYRLESDDMYLVGTSEVPLAGYHADEIIDLSAGPRRYAGWSSCFRREAGSYGKDTRGIIRVHQFDKVEGFIYCKPEDAAAEHDRLLGWQREMLALIEVPYRVIDVAAGDLGSSAARKYDCEAWVPTQQTYRELTSTSNCTTFQARRLSTRYRDENGKPQIAATLNGTLATTRWLVAILENHQQPDGSVRVPAALVPFVGTEVLEP.

L-serine is bound at residue 226-228 (TSE). ATP-binding positions include 257–259 (RRE) and Val-273. Position 280 (Glu-280) interacts with L-serine. Residue 344 to 347 (ELTS) participates in ATP binding. Thr-379 lines the L-serine pocket.

The protein belongs to the class-II aminoacyl-tRNA synthetase family. Type-1 seryl-tRNA synthetase subfamily. As to quaternary structure, homodimer. The tRNA molecule binds across the dimer.

The protein resides in the cytoplasm. The catalysed reaction is tRNA(Ser) + L-serine + ATP = L-seryl-tRNA(Ser) + AMP + diphosphate + H(+). It catalyses the reaction tRNA(Sec) + L-serine + ATP = L-seryl-tRNA(Sec) + AMP + diphosphate + H(+). It participates in aminoacyl-tRNA biosynthesis; selenocysteinyl-tRNA(Sec) biosynthesis; L-seryl-tRNA(Sec) from L-serine and tRNA(Sec): step 1/1. In terms of biological role, catalyzes the attachment of serine to tRNA(Ser). Is also able to aminoacylate tRNA(Sec) with serine, to form the misacylated tRNA L-seryl-tRNA(Sec), which will be further converted into selenocysteinyl-tRNA(Sec). In Mycobacterium sp. (strain KMS), this protein is Serine--tRNA ligase.